The sequence spans 82 residues: ATP synthase subunit c, chloroplastic (82 aa).

2 consecutive transmembrane segments (helical) span residues 7 to 27 (GASV…PGIG) and 57 to 77 (LAFM…LLFA).

The protein belongs to the ATPase C chain family. In terms of assembly, F-type ATPases have 2 components, F(1) - the catalytic core - and F(0) - the membrane proton channel. F(1) has five subunits: alpha(3), beta(3), gamma(1), delta(1), epsilon(1). F(0) has four main subunits: a(1), b(1), b'(1) and c(10-14). The alpha and beta chains form an alternating ring which encloses part of the gamma chain. F(1) is attached to F(0) by a central stalk formed by the gamma and epsilon chains, while a peripheral stalk is formed by the delta, b and b' chains.

The protein localises to the plastid. It localises to the chloroplast thylakoid membrane. In terms of biological role, f(1)F(0) ATP synthase produces ATP from ADP in the presence of a proton or sodium gradient. F-type ATPases consist of two structural domains, F(1) containing the extramembraneous catalytic core and F(0) containing the membrane proton channel, linked together by a central stalk and a peripheral stalk. During catalysis, ATP synthesis in the catalytic domain of F(1) is coupled via a rotary mechanism of the central stalk subunits to proton translocation. Functionally, key component of the F(0) channel; it plays a direct role in translocation across the membrane. A homomeric c-ring of between 10-14 subunits forms the central stalk rotor element with the F(1) delta and epsilon subunits. This Emiliania huxleyi (Coccolithophore) protein is ATP synthase subunit c, chloroplastic.